The sequence spans 169 residues: Peptide methionine sulfoxide reductase MsrA (169 aa).

Cys13 is a catalytic residue.

It belongs to the MsrA Met sulfoxide reductase family.

The enzyme catalyses L-methionyl-[protein] + [thioredoxin]-disulfide + H2O = L-methionyl-(S)-S-oxide-[protein] + [thioredoxin]-dithiol. It carries out the reaction [thioredoxin]-disulfide + L-methionine + H2O = L-methionine (S)-S-oxide + [thioredoxin]-dithiol. Functionally, has an important function as a repair enzyme for proteins that have been inactivated by oxidation. Catalyzes the reversible oxidation-reduction of methionine sulfoxide in proteins to methionine. This is Peptide methionine sulfoxide reductase MsrA from Mycolicibacterium vanbaalenii (strain DSM 7251 / JCM 13017 / BCRC 16820 / KCTC 9966 / NRRL B-24157 / PYR-1) (Mycobacterium vanbaalenii).